We begin with the raw amino-acid sequence, 1270 residues long: Myosin-3 (1270 aa).

The tract at residues 1 to 20 (MAVIKKGARRKDVKEPKKRS) is disordered. A Myosin motor domain is found at 36-715 (VGVSDLTLLS…SLFALEDMRD (680 aa)). Position 129–136 (129–136 (GESGAGKT)) interacts with ATP. S357 carries the post-translational modification Phosphoserine. Residues 404 to 486 (SIGILDIYGF…PGILAAMNDS (83 aa)) form an actin-binding region. 2 IQ domains span residues 719–739 (YNMA…RIDA) and 740–765 (AIKI…YGTK). The 191-residue stretch at 771-961 (KERRSMSLLG…TIYVRRGHPA (191 aa)) folds into the TH1 domain. Disordered stretches follow at residues 951-1015 (STIY…QKPV), 1029-1136 (YNPK…GSSS), and 1215-1270 (VQFG…DDDW). The segment covering 980-1000 (IKSKKSKHKSTHKHTHSHRSH) has biased composition (basic residues). Residues 1066–1078 (KKASSSHKSSSAK) are compositionally biased toward low complexity. The span at 1089–1098 (GVEKNKEPLK) shows a compositional bias: basic and acidic residues. Positions 1107–1116 (PIPPPPPPMG) are enriched in pro residues. The SH3 domain occupies 1118–1180 (PKDPKFEAAY…PTAYMTPYKD (63 aa)). Polar residues predominate over residues 1215–1234 (VQFGSATVGPTSDNQSNPVG). Residues 1256-1270 (ADDDDNDDGDDDDDW) show a composition bias toward acidic residues.

This sequence belongs to the TRAFAC class myosin-kinesin ATPase superfamily. Myosin family. In terms of assembly, interacts (via myosin motor domain) with SHE4; this interaction is important for proper localization and may regulate the interaction of the motor domain with actin. Interacts (via SH3 domain) with VRP1; this interaction is required for localization to sites of polarized growth and may regulate the interaction of the tail domain with actin. Interacts (via SH3 domain) with PAN1; this interaction is important for late stages of endocytopsis. Interacts (via SH3 domain) with BBC1 and LAS17. Interacts (via C-terminal acidic tail) with ARC19 and ARC40; ARC19 and ARC40 are Arp2/3 complex subunits. Phosphorylation of the TEDS site (Ser-357) is required for the polarization of the actin cytoskeleton and for ligand-induced, but not for constitutive internalization of STE2. Phosphorylation probably activates the myosin-I ATPase. Ser-357 is phosphorylated by CLA4 and STE20 in vitro.

The protein resides in the cytoplasm. Its subcellular location is the cytoskeleton. It is found in the actin patch. Its function is as follows. One of two redundant type-I myosins implicated in the organization of the actin cytoskeleton. Required for proper actin cytoskeleton polarization and for the internalization step in endocytosis. At the cell cortex, assembles in patch-like structures together with proteins from the actin-polymerizing machinery and promotes actin assembly. Functions redundantly with LAS17 as actin nucleation-promoting factor (NPF) for the Arp2/3 complex. Motor domain phosphorylation by PAK kinases CLA4 and STE20 promotes CDC42-regulated actin assembly. Functions together with the NPF PAN1 in late stages of endocytosis. Motor domain phosphorylation by PDK1 kinases PKH1 and PKH2, and by SGK kinases YPK1 and YPK2, promotes ligand-induced, but not constitutive endocytosis of the G protein-coupled receptor STE2. This is Myosin-3 (MYO3) from Saccharomyces cerevisiae (strain YJM789) (Baker's yeast).